The sequence spans 400 residues: MGGWSSKPRKGMGTNLSVPNPLGFFPDHQLDPAFGANSNNPDWDFNPIKDHWPQANQVGVGAFGPGFTPPHGGVLGWSPQAQGILATVPAMPPPASTNRQSGRQPTPISPPLRDSHPQAMQWNSTAFHQALQDPRVRGLYFPAGGSSSGTLNPVPTIASHISSISSRIGDPAPNMENITSGFLGPLLVLQAGFFLLTRILTIPQSLDSWWTSLNFLGGAPVCLGQNSQSPTSNHSPTSCPPICPGYRWMCLRRFIIFLFILLLCLIFLLVLLDYQGMLPVCPLIPGSTTTSTGPCKTCTTPAQGNSMFPSCCCTKPTDGNCTCIPIPSSWAFAKYLWEWASVRFSWLSLLVPFVQWFVGLSPTVWLSAIWMMWYWGPSLYNILSPFIPLLPIFFCLWVYI.

An N-acetylmethionine modification is found at M1. 2 disordered regions span residues 1–24 and 89–116; these read MGGW…PLGF and PAMP…RDSH. G2 carries N-myristoyl glycine; by host lipidation. The interval 2-119 is pre-S1; that stretch reads GGWSSKPRKG…PPLRDSHPQA (118 aa). Residues 2-174 are pre-S; sequence GGWSSKPRKG…SSRIGDPAPN (173 aa). The Virion surface; in external conformation segment spans residues 2–181; the sequence is GGWSSKPRKG…APNMENITSG (180 aa). Residues 2–253 are Intravirion; in internal conformation-facing; that stretch reads GGWSSKPRKG…PGYRWMCLRR (252 aa). An N-linked (GlcNAc...) asparagine glycan is attached at W4. Polar residues predominate over residues 96–106; it reads STNRQSGRQPT. The segment at 120-174 is pre-S2; sequence MQWNSTAFHQALQDPRVRGLYFPAGGSSSGTLNPVPTIASHISSISSRIGDPAPN. Residues 182-202 form a helical membrane-spanning segment; the sequence is FLGPLLVLQAGFFLLTRILTI. The Intravirion; in external conformation portion of the chain corresponds to 203 to 253; it reads PQSLDSWWTSLNFLGGAPVCLGQNSQSPTSNHSPTSCPPICPGYRWMCLRR. Residues 254–274 form a helical membrane-spanning segment; it reads FIIFLFILLLCLIFLLVLLDY. Residues 275–348 are Virion surface-facing; the sequence is QGMLPVCPLI…WASVRFSWLS (74 aa). The N-linked (GlcNAc...) asparagine; by host glycan is linked to N320. Residues 349–369 form a helical membrane-spanning segment; it reads LLVPFVQWFVGLSPTVWLSAI. Topologically, residues 370-375 are intravirion; that stretch reads WMMWYW. Residues 376-398 form a helical membrane-spanning segment; sequence GPSLYNILSPFIPLLPIFFCLWV. Residues 399 to 400 lie on the Virion surface side of the membrane; that stretch reads YI.

This sequence belongs to the orthohepadnavirus major surface antigen family. In terms of assembly, in its internal form (Li-HBsAg), interacts with the capsid protein and with the isoform S. Interacts with host chaperone CANX. As to quaternary structure, associates with host chaperone CANX through its pre-S2 N glycan; this association may be essential for isoform M proper secretion. Interacts with isoform L. Interacts with the antigens of satellite virus HDV (HDVAgs); this interaction is required for encapsidation of HDV genomic RNA. In terms of processing, isoform M is N-terminally acetylated by host at a ratio of 90%, and N-glycosylated by host at the pre-S2 region. Post-translationally, myristoylated.

The protein resides in the virion membrane. Functionally, the large envelope protein exists in two topological conformations, one which is termed 'external' or Le-HBsAg and the other 'internal' or Li-HBsAg. In its external conformation the protein attaches the virus to cell receptors and thereby initiating infection. This interaction determines the species specificity and liver tropism. This attachment induces virion internalization predominantly through caveolin-mediated endocytosis. The large envelope protein also assures fusion between virion membrane and endosomal membrane. In its internal conformation the protein plays a role in virion morphogenesis and mediates the contact with the nucleocapsid like a matrix protein. Its function is as follows. The middle envelope protein plays an important role in the budding of the virion. It is involved in the induction of budding in a nucleocapsid independent way. In this process the majority of envelope proteins bud to form subviral lipoprotein particles of 22 nm of diameter that do not contain a nucleocapsid. This chain is Large envelope protein, found in Hepatitis B virus genotype A1 subtype adw (isolate Philippines/pFDW294/1988) (HBV-A).